The following is a 373-amino-acid chain: Protein-glutamate methylesterase/protein-glutamine glutaminase 1 (373 aa).

A Response regulatory domain is found at 16 to 133; that stretch reads RVVVVDDSAL…ASGLTELSDQ (118 aa). Aspartate 67 is subject to 4-aspartylphosphate. The region spanning 175–367 is the CheB-type methylesterase domain; the sequence is RVSTEKLICI…PALIAKLSSA (193 aa). Catalysis depends on residues serine 187, histidine 213, and aspartate 309.

It belongs to the CheB family. In terms of processing, phosphorylated by CheA. Phosphorylation of the N-terminal regulatory domain activates the methylesterase activity.

The protein resides in the cytoplasm. It carries out the reaction [protein]-L-glutamate 5-O-methyl ester + H2O = L-glutamyl-[protein] + methanol + H(+). It catalyses the reaction L-glutaminyl-[protein] + H2O = L-glutamyl-[protein] + NH4(+). Functionally, involved in chemotaxis. Part of a chemotaxis signal transduction system that modulates chemotaxis in response to various stimuli. Catalyzes the demethylation of specific methylglutamate residues introduced into the chemoreceptors (methyl-accepting chemotaxis proteins or MCP) by CheR. Also mediates the irreversible deamidation of specific glutamine residues to glutamic acid. The chain is Protein-glutamate methylesterase/protein-glutamine glutaminase 1 from Albidiferax ferrireducens (strain ATCC BAA-621 / DSM 15236 / T118) (Rhodoferax ferrireducens).